We begin with the raw amino-acid sequence, 530 residues long: C2H2-type transcription factor MSN2 (530 aa).

C2H2-type zinc fingers lie at residues 409-437 (FVCDLCNRRFRRQEHLKRHYRSLHTQEKP) and 438-465 (FECNECGKKFSRSDNLAQHARTHASGGA).

It localises to the nucleus. The protein localises to the cytoplasm. Transcription factor that acts as a key downstream transcription factor in the HOG1-MAPK pathway. Plays crucial roles in the regulation of dimorphism transition, aggravated pigmentation, conidiation, microsclerotia formation and subsequent virulence towards Spodoptera litura larvae. More specifically regulates the expression of genes involved in antioxidation, pigment biosynthesis and ion transport and storage. The polypeptide is C2H2-type transcription factor MSN2 (Metarhizium rileyi (strain RCEF 4871) (Nomuraea rileyi)).